A 497-amino-acid chain; its full sequence is Putative aldehyde dehydrogenase AldA (497 aa).

213 to 219 (GKGSESG) serves as a coordination point for NAD(+). Active-site residues include E257 and C291.

This sequence belongs to the aldehyde dehydrogenase family.

It catalyses the reaction an aldehyde + NAD(+) + H2O = a carboxylate + NADH + 2 H(+). In Staphylococcus haemolyticus (strain JCSC1435), this protein is Putative aldehyde dehydrogenase AldA (aldA).